The sequence spans 149 residues: UPF0178 protein Pmen_0294 (149 aa).

The protein belongs to the UPF0178 family.

The chain is UPF0178 protein Pmen_0294 from Ectopseudomonas mendocina (strain ymp) (Pseudomonas mendocina).